A 249-amino-acid chain; its full sequence is tRNA pseudouridine synthase A (249 aa).

The Nucleophile role is filled by aspartate 53. Tyrosine 111 provides a ligand contact to substrate.

It belongs to the tRNA pseudouridine synthase TruA family. In terms of assembly, homodimer.

The catalysed reaction is uridine(38/39/40) in tRNA = pseudouridine(38/39/40) in tRNA. Its function is as follows. Formation of pseudouridine at positions 38, 39 and 40 in the anticodon stem and loop of transfer RNAs. This chain is tRNA pseudouridine synthase A, found in Streptococcus suis (strain 98HAH33).